We begin with the raw amino-acid sequence, 101 residues long: Apolipoprotein C-II (101 aa).

The N-terminal stretch at 1-22 (MGIRYLLVLVLVLLVLGCEVQG) is a signal peptide. Positions 66-74 (TMDEKIREI) are lipid binding. The segment at 78-101 (STAAVSTYAGIFTDQLLSMLKGDQ) is lipoprotein lipase cofactor.

This sequence belongs to the apolipoprotein C2 family. In terms of processing, proapolipoprotein C-II is synthesized as a sialic acid containing glycoprotein which is subsequently desialylated prior to its proteolytic processing. Post-translationally, proapolipoprotein C-II, the major form found in plasma undergoes proteolytic cleavage of its N-terminal hexapeptide to generate apolipoprotein C-II, which occurs as the minor form in plasma.

It is found in the secreted. In terms of biological role, component of chylomicrons, very low-density lipoproteins (VLDL), low-density lipoproteins (LDL), and high-density lipoproteins (HDL) in plasma. Plays an important role in lipoprotein metabolism as an activator of lipoprotein lipase. Both proapolipoprotein C-II and apolipoprotein C-II can activate lipoprotein lipase. This Phoca vitulina (Harbor seal) protein is Apolipoprotein C-II (APOC2).